The primary structure comprises 1134 residues: Myosin-4 (1134 aa).

The Myosin N-terminal SH3-like domain occupies 110–160 (REKLCVWCRVAANGQWHLGKIHSTSSSDDVCVMLSANDDVRTMEEIFPANP). A Myosin motor domain is found at 164-830 (EGVEDLTQLS…VISVLEERKK (667 aa)). ATP is bound by residues 255 to 262 (GESGAGKT) and 304 to 312 (NDNSSRFGK). 2 actin-binding regions span residues 589 to 623 (LIEK…KQHL) and 710 to 732 (LFKL…KPNS). 3 consecutive IQ domains span residues 832 to 861 (VLRG…AAVI), 855 to 884 (MRNA…SAIV), and 891 to 920 (ELDA…KNKP). A disordered region spans residues 913–939 (STQQKNKPRNEKKKTRRKSTKRVSEDK). Positions 918-933 (NKPRNEKKKTRRKSTK) are enriched in basic residues. Positions 953–999 (LADLQSRVLKVEAAIMQKEDENTALQEELQRFEERWLENETRMKSME) form a coiled coil.

Belongs to the TRAFAC class myosin-kinesin ATPase superfamily. Myosin family. Plant myosin class VIII subfamily. As to quaternary structure, homodimer.

In terms of biological role, myosin heavy chain that is required for the cell cycle-regulated transport of various organelles and proteins for their segregation. Functions by binding with its tail domain to receptor proteins on organelles and exerting force with its N-terminal motor domain against actin filaments, thereby transporting its cargo along polarized actin cables. This is Myosin-4 (VIII-B) from Arabidopsis thaliana (Mouse-ear cress).